Here is a 151-residue protein sequence, read N- to C-terminus: Nucleoside diphosphate kinase (151 aa).

Lys10, Phe58, Arg86, Thr92, Arg103, and Asn113 together coordinate ATP. His116 (pros-phosphohistidine intermediate) is an active-site residue.

The protein belongs to the NDK family. As to quaternary structure, homotetramer. Requires Mg(2+) as cofactor.

The protein localises to the cytoplasm. The enzyme catalyses dZDP + ATP = dZTP + ADP. It carries out the reaction a 2'-deoxyribonucleoside 5'-diphosphate + ATP = a 2'-deoxyribonucleoside 5'-triphosphate + ADP. The catalysed reaction is a ribonucleoside 5'-diphosphate + ATP = a ribonucleoside 5'-triphosphate + ADP. It participates in purine metabolism. Functionally, major role in the synthesis of nucleoside triphosphates other than ATP. The ATP gamma phosphate is transferred to the NDP beta phosphate via a ping-pong mechanism, using a phosphorylated active-site intermediate. (Microbial infection) Catalyzes the phosphorylation of dZDP to dZTP, when the bacterium is infected by a phage that produces the substrate for the synthesis of dZTP (2- amino-2'-deoxyadenosine 5'-triphosphate), which is then used by the phage as a DNA polymerase substrate. The sequence is that of Nucleoside diphosphate kinase from Synechococcus sp. (strain CC9605).